The following is a 597-amino-acid chain: Kelch-like protein 21 (597 aa).

The BTB domain maps to 35 to 103 (LDVTLEAAGG…SYTGRVAVSG (69 aa)). Positions 138–239 (CLDMQDFAEA…RRFYLLAHVE (102 aa)) constitute a BACK domain. 6 Kelch repeats span residues 287–335 (ILVL…ALGN), 336–382 (DIYV…VLNG), 384–422 (LYVV…ACRG), 423–470 (RLYA…TLNG), 472–512 (MYFV…ALGG), and 513–560 (KLYV…SIFR). Residues 570 to 597 (GRGFELNSGSSDVDAGHHRLPQNPEELQ) form a disordered region.

Component of the BCR(KLHL21) E3 ubiquitin ligase complex, at least composed of CUL3, KLHL21 and RBX1.

It localises to the cytoplasm. The protein resides in the cytoskeleton. The protein localises to the spindle. It participates in protein modification; protein ubiquitination. Functionally, substrate-specific adapter of BCR (BTB-CUL3-RBX1) E3 ubiquitin-protein ligase complex required for efficient chromosome alignment and cytokinesis. The BCR(KLHL21) E3 ubiquitin ligase complex regulates localization of the chromosomal passenger complex (CPC) from chromosomes to the spindle midzone in anaphase and mediates the ubiquitination of AURKB. Ubiquitination of AURKB by BCR(KLHL21) E3 ubiquitin ligase complex may not lead to its degradation by the proteasome. This chain is Kelch-like protein 21 (Klhl21), found in Rattus norvegicus (Rat).